The primary structure comprises 285 residues: 4-diphosphocytidyl-2-C-methyl-D-erythritol kinase (285 aa).

Residue K10 is part of the active site. 92 to 102 provides a ligand contact to ATP; the sequence is PFGAGLGGGSS. Residue D134 is part of the active site.

The protein belongs to the GHMP kinase family. IspE subfamily.

The catalysed reaction is 4-CDP-2-C-methyl-D-erythritol + ATP = 4-CDP-2-C-methyl-D-erythritol 2-phosphate + ADP + H(+). It participates in isoprenoid biosynthesis; isopentenyl diphosphate biosynthesis via DXP pathway; isopentenyl diphosphate from 1-deoxy-D-xylulose 5-phosphate: step 3/6. In terms of biological role, catalyzes the phosphorylation of the position 2 hydroxy group of 4-diphosphocytidyl-2C-methyl-D-erythritol. This is 4-diphosphocytidyl-2-C-methyl-D-erythritol kinase from Chloroherpeton thalassium (strain ATCC 35110 / GB-78).